We begin with the raw amino-acid sequence, 195 residues long: SXP/RAL-2-like protein 2 (195 aa).

The segment at 162–195 (EKVHGGSHGGLRGGPGGPRDGPRGGPRGGPRGGR) is disordered. A compositionally biased stretch (gly residues) spans 167-195 (GSHGGLRGGPGGPRDGPRGGPRGGPRGGR).

Belongs to the SXP/RAL-2 family.

This chain is SXP/RAL-2-like protein 2, found in Caenorhabditis elegans.